The primary structure comprises 300 residues: MDNLLSTEYLNTTEIYDLIQRASAFKNGNAQPGCFEDKFVANLFFENSTRTKSSFLVAEQKLGLKLIDFETSTSSVQKGESLYDTCKTLEQIGANVLVIRHSQTTYYDELKHLNIPIINAGDGSGQHPTQSLLDLMTIYEEYKTFEGLNVLICGDVKNSRVAKSNYQSLTALGAHVMFSSPDEWKDETLEAPYVDIDEVIDRIDIVMLLRVQHERHEDSEVTSFEVSQYHENFGLTQSRYDLLKDRAIIMHPAPVNRGVEIEDTLVEAPKSRIFKQMENGMYIRMAVIDHILQTEGATAK.

2 residues coordinate carbamoyl phosphate: R50 and T51. Residue K78 participates in L-aspartate binding. Residues R100, H127, and Q130 each coordinate carbamoyl phosphate. L-aspartate is bound by residues R160 and R210. Carbamoyl phosphate-binding residues include A253 and P254.

The protein belongs to the aspartate/ornithine carbamoyltransferase superfamily. ATCase family. In terms of assembly, heterododecamer (2C3:3R2) of six catalytic PyrB chains organized as two trimers (C3), and six regulatory PyrI chains organized as three dimers (R2).

It carries out the reaction carbamoyl phosphate + L-aspartate = N-carbamoyl-L-aspartate + phosphate + H(+). It functions in the pathway pyrimidine metabolism; UMP biosynthesis via de novo pathway; (S)-dihydroorotate from bicarbonate: step 2/3. In terms of biological role, catalyzes the condensation of carbamoyl phosphate and aspartate to form carbamoyl aspartate and inorganic phosphate, the committed step in the de novo pyrimidine nucleotide biosynthesis pathway. This Staphylococcus saprophyticus subsp. saprophyticus (strain ATCC 15305 / DSM 20229 / NCIMB 8711 / NCTC 7292 / S-41) protein is Aspartate carbamoyltransferase catalytic subunit.